The following is a 116-amino-acid chain: Large ribosomal subunit protein uL24 (116 aa).

The tract at residues 1–27 (MAGRKSSTPTRHKMHVKTGDTVQVISG) is disordered.

It belongs to the universal ribosomal protein uL24 family. In terms of assembly, part of the 50S ribosomal subunit.

One of two assembly initiator proteins, it binds directly to the 5'-end of the 23S rRNA, where it nucleates assembly of the 50S subunit. In terms of biological role, one of the proteins that surrounds the polypeptide exit tunnel on the outside of the subunit. In Picosynechococcus sp. (strain ATCC 27264 / PCC 7002 / PR-6) (Agmenellum quadruplicatum), this protein is Large ribosomal subunit protein uL24.